A 288-amino-acid polypeptide reads, in one-letter code: 4-diphosphocytidyl-2-C-methyl-D-erythritol kinase (288 aa).

Lysine 13 is a catalytic residue. 96–106 (PIGGGIGGGSS) lines the ATP pocket. The active site involves aspartate 138.

It belongs to the GHMP kinase family. IspE subfamily.

It carries out the reaction 4-CDP-2-C-methyl-D-erythritol + ATP = 4-CDP-2-C-methyl-D-erythritol 2-phosphate + ADP + H(+). It participates in isoprenoid biosynthesis; isopentenyl diphosphate biosynthesis via DXP pathway; isopentenyl diphosphate from 1-deoxy-D-xylulose 5-phosphate: step 3/6. Its function is as follows. Catalyzes the phosphorylation of the position 2 hydroxy group of 4-diphosphocytidyl-2C-methyl-D-erythritol. This chain is 4-diphosphocytidyl-2-C-methyl-D-erythritol kinase, found in Aliivibrio salmonicida (strain LFI1238) (Vibrio salmonicida (strain LFI1238)).